Here is a 507-residue protein sequence, read N- to C-terminus: ATP synthase subunit alpha, chloroplastic (507 aa).

ATP is bound at residue 170–177; it reads GDRQTGKT.

It belongs to the ATPase alpha/beta chains family. In terms of assembly, F-type ATPases have 2 components, CF(1) - the catalytic core - and CF(0) - the membrane proton channel. CF(1) has five subunits: alpha(3), beta(3), gamma(1), delta(1), epsilon(1). CF(0) has four main subunits: a, b, b' and c.

It localises to the plastid. It is found in the chloroplast thylakoid membrane. The catalysed reaction is ATP + H2O + 4 H(+)(in) = ADP + phosphate + 5 H(+)(out). Functionally, produces ATP from ADP in the presence of a proton gradient across the membrane. The alpha chain is a regulatory subunit. This is ATP synthase subunit alpha, chloroplastic from Physcomitrium patens (Spreading-leaved earth moss).